Reading from the N-terminus, the 555-residue chain is Cinnamate beta-D-glucosyltransferase (555 aa).

The Proton acceptor role is filled by His19. His19 provides a ligand contact to an anthocyanidin. Residues Gln344, His359, Trp362, Asn363, Ser364, and Glu367 each contribute to the UDP-alpha-D-glucose site. Gly382 lines the an anthocyanidin pocket. Asp383 and Gln384 together coordinate UDP-alpha-D-glucose.

This sequence belongs to the UDP-glycosyltransferase family. Highest expression detected in fruit, with lower levels detected in flower and petiole. Barely detectable in leaf and root.

The enzyme catalyses (E)-cinnamate + UDP-alpha-D-glucose = 1-O-(trans-cinnamoyl)-beta-D-glucose + UDP. Functionally, broad spectrum multifunctional glucosyltransferase. Catalyzes the formation of cinnamic acid and p-coumaric acid glucose esters during fruit ripening. Accepted substrates range from derivatives of cinnamic acid and benzoic acid to heterocyclic and aliphatic compounds, resulting in the formation of O- and S-glucose esters and O-glucosides. May also be involved in detoxification of xenobiotics. This Fragaria ananassa (Strawberry) protein is Cinnamate beta-D-glucosyltransferase.